A 402-amino-acid polypeptide reads, in one-letter code: MNHPAARLDARLAPRLAERRQAGLYRCAEALEDYDGATAVRSDGQRCTVFCGNDYLGLAADPRPARALAEHARRQGSGAGAAHLVTGHRPEHEALEAELAAFTGREAALLFSTGYMANLGVVTTLVRRGQAVAEDRLNHASLIDAVRLAGGRPRRYRHADPTHLAQRLDDRAQLVVTDGVFSMDGDVAPLPELAAAAEATGAALVVDDAHGLGVIGPEGGGSVPATGCAPERVPVLVGTLGKAFGTFGAFVAGSRTLIDALRQWARPYIYTTAPPPAQAAAALEAVRIARAEGWRREHLQALIARFRSGARQLGLPVPQPAGPRTPIQPVLVGPSATATAWSAELDRRGLRVAAIRPPTVPAGTARLRVSLTACHSEEDVDRLLEALAAAARQAPPTLEAPS.

R26 provides a ligand contact to substrate. 114–115 (GY) contacts pyridoxal 5'-phosphate. H139 provides a ligand contact to substrate. Pyridoxal 5'-phosphate contacts are provided by S182, H210, and T239. An N6-(pyridoxal phosphate)lysine modification is found at K242. T359 serves as a coordination point for substrate.

This sequence belongs to the class-II pyridoxal-phosphate-dependent aminotransferase family. BioF subfamily. As to quaternary structure, homodimer. Pyridoxal 5'-phosphate serves as cofactor.

It carries out the reaction 6-carboxyhexanoyl-[ACP] + L-alanine + H(+) = (8S)-8-amino-7-oxononanoate + holo-[ACP] + CO2. It participates in cofactor biosynthesis; biotin biosynthesis. Functionally, catalyzes the decarboxylative condensation of pimeloyl-[acyl-carrier protein] and L-alanine to produce 8-amino-7-oxononanoate (AON), [acyl-carrier protein], and carbon dioxide. The protein is 8-amino-7-oxononanoate synthase of Halorhodospira halophila (strain DSM 244 / SL1) (Ectothiorhodospira halophila (strain DSM 244 / SL1)).